We begin with the raw amino-acid sequence, 578 residues long: Thrombomodulin (578 aa).

A signal peptide spans methionine 1 to glycine 16. The Extracellular segment spans residues leucine 17 to serine 518. Residues methionine 31 to cysteine 167 enclose the C-type lectin domain. Asparagine 114 is a glycosylation site (N-linked (GlcNAc...) asparagine). 19 cysteine pairs are disulfide-bonded: cysteine 137–cysteine 158, cysteine 246–cysteine 257, cysteine 253–cysteine 266, cysteine 268–cysteine 281, cysteine 289–cysteine 297, cysteine 293–cysteine 309, cysteine 311–cysteine 324, cysteine 330–cysteine 341, cysteine 337–cysteine 350, cysteine 352–cysteine 363, cysteine 370–cysteine 379, cysteine 375–cysteine 389, cysteine 391–cysteine 405, cysteine 409–cysteine 414, cysteine 418–cysteine 426, cysteine 428–cysteine 440, cysteine 446–cysteine 455, cysteine 451–cysteine 464, and cysteine 466–cysteine 480. 2 EGF-like domains span residues glycine 242 to alanine 282 and alanine 285 to glutamate 325. Residue asparagine 300 is glycosylated (N-linked (GlcNAc...) asparagine). One can recognise an EGF-like 3; calcium-binding domain in the interval aspartate 326 to valine 364. Asparagine 343 is modified ((3R)-3-hydroxyasparagine). EGF-like domains follow at residues proline 366–glutamine 406 and cysteine 405–threonine 441. A glycan (N-linked (GlcNAc...) asparagine) is linked at asparagine 410. The EGF-like 6; calcium-binding domain occupies aspartate 442–glycine 481. The segment at isoleucine 483–proline 512 is disordered. 2 O-linked (Xyl...) (chondroitin sulfate) serine glycosylation sites follow: serine 493 and serine 495. Over residues proline 499 to proline 512 the composition is skewed to pro residues. The chain crosses the membrane as a helical span at residues glycine 519 to leucine 539. Over cysteine 540–leucine 578 the chain is Cytoplasmic.

Interacts with ITGAL, ITGAM and ITGB2. Interacts with thrombin/F2; this interaction switches the specificity of thrombin from a procoagulant to an anticoagulant and antifibrinolytic protease. Interacts with ANGP1 and ANGP2; these interactions significantly inhibit the generation of activated PC and TAFIa/CPB2 by the thrombin/thrombomodulin complex. Interacts with PF4; this interaction enhances generation of activated protein C. Interacts with HMGB1; this interaction inhibits HMGB1 inflammatory activity. N-glycosylated. Post-translationally, the iron and 2-oxoglutarate dependent 3-hydroxylation of aspartate and asparagine is (R) stereospecific within EGF domains. As to expression, expressed in lung, liver, spleen, kidney, pancreas and lymph node. Low expression in heart, cerebrum, urinary bladder and uterus.

The protein resides in the membrane. Endothelial cell receptor that plays a critical role in regulating several physiological processes including hemostasis, coagulation, fibrinolysis, inflammation, and angiogenesis. Acts as a cofactor for thrombin activation of protein C/PROC on the surface of vascular endothelial cells leading to initiation of the activated protein C anticoagulant pathway. Also accelerates the activation of the plasma carboxypeptidase B2/CPB2, which catalyzes removal of C-terminal basic amino acids from its substrates including kinins or anaphylatoxins leading to fibrinolysis inhibition. Plays critical protective roles in changing the cleavage specificity of protease-activated receptor 1/PAR1, inhibiting endothelial cell permeability and inflammation. Suppresses inflammation distinctly from its anticoagulant cofactor activity by sequestering HMGB1 thereby preventing it from engaging cellular receptors such as RAGE and contributing to the inflammatory response. In Canis lupus familiaris (Dog), this protein is Thrombomodulin (THBD).